Here is a 344-residue protein sequence, read N- to C-terminus: MIEIRNISQRFAGPRGSVEALHNVNLSIPAGEVFGIIGRSGAGKSTLVRTINLLTRPSEGNIVVNGRDLTTLPAAQLREARREIGMIFQHFNLLSSRTVYGNVALPLELAGMKRDEIEANVLPLLELVGLTAQKDRYPAQISGGQKQRVGIARALASKPKVLLSDEATSALDPETTRSILDLLRRINRELNLTIVLITHQMDVIKQVCDRVAVLDAGRVVEEGKVIDVFLQPHHEVTRALIGDVIAQELPPAMKARVAERLKTGSGHLLRLAFTGSGVDQPILSETIRRYELDFNILHGQIDEIQGQAFGSLAVLAGGEPAKVAQALTYLREQGVVVEELSYVE.

The ABC transporter domain maps to 2 to 241 (IEIRNISQRF…PHHEVTRALI (240 aa)). 38–45 (GRSGAGKS) is an ATP binding site.

It belongs to the ABC transporter superfamily. Methionine importer (TC 3.A.1.24) family. In terms of assembly, the complex is composed of two ATP-binding proteins (MetN), two transmembrane proteins (MetI) and a solute-binding protein (MetQ).

Its subcellular location is the cell inner membrane. The catalysed reaction is L-methionine(out) + ATP + H2O = L-methionine(in) + ADP + phosphate + H(+). It carries out the reaction D-methionine(out) + ATP + H2O = D-methionine(in) + ADP + phosphate + H(+). Its function is as follows. Part of the ABC transporter complex MetNIQ involved in methionine import. Responsible for energy coupling to the transport system. This chain is Methionine import ATP-binding protein MetN 1, found in Paraburkholderia xenovorans (strain LB400).